A 437-amino-acid chain; its full sequence is Argininosuccinate lyase (437 aa).

It belongs to the lyase 1 family. Argininosuccinate lyase subfamily.

Its subcellular location is the cytoplasm. The enzyme catalyses 2-(N(omega)-L-arginino)succinate = fumarate + L-arginine. The protein operates within amino-acid biosynthesis; L-arginine biosynthesis; L-arginine from L-ornithine and carbamoyl phosphate: step 3/3. The protein is Argininosuccinate lyase of Clostridium acetobutylicum (strain ATCC 824 / DSM 792 / JCM 1419 / IAM 19013 / LMG 5710 / NBRC 13948 / NRRL B-527 / VKM B-1787 / 2291 / W).